The following is a 233-amino-acid chain: Superoxide dismutase [Mn] 3.4, mitochondrial (233 aa).

Residues 1–29 (MALRTLASKNALSFALGGAARPSAASARG) constitute a mitochondrion transit peptide. H57, H105, D194, and H198 together coordinate Mn(2+).

This sequence belongs to the iron/manganese superoxide dismutase family. As to quaternary structure, homotetramer. It depends on Mn(2+) as a cofactor.

Its subcellular location is the mitochondrion matrix. The catalysed reaction is 2 superoxide + 2 H(+) = H2O2 + O2. Its function is as follows. Destroys superoxide anion radicals which are normally produced within the cells and which are toxic to biological systems. The protein is Superoxide dismutase [Mn] 3.4, mitochondrial (SODA.3) of Zea mays (Maize).